The sequence spans 691 residues: Calcium-binding and coiled-coil domain-containing protein 1 (691 aa).

The segment at 1–30 (MEESPLSRAPSRGGVNFLNVARTYIPNTKV) is p300 KIX-binding. Positions 1–190 (MEESPLSRAP…VQELERALAT (190 aa)) are N-terminal AD (CTNNB1 binding site). Position 4 is a phosphoserine (Ser-4). Positions 45 to 125 (SDWIGIFKVE…FQFREPRPMD (81 aa)) are interaction with GATA1. Coiled-coil stretches lie at residues 145 to 205 (KATV…YKGI), 232 to 339 (ELED…AELE), and 417 to 514 (QSVE…ADEK). Residues 501-691 (RKLEARLEKV…FSTQDPFTFE (191 aa)) form a C-terminal AD (CTNNB1 binding site); interaction with CCAR1 region. The tract at residues 513–604 (EKWNEDATTE…SDSEAEDEKS (92 aa)) is disordered. A UBZ1-type zinc finger spans residues 653 to 679 (WKECPICKERFPAESDKDALEDHMDGH). Zn(2+)-binding residues include Cys-656, Cys-659, His-675, and His-679.

Belongs to the CALCOCO family. In terms of assembly, part of a calphoglin complex consisting of CALCOCO1, PPA1 and PGM. Interacts with the bHLH-PAS domains of GRIP1, AHR and ARNT. Interacts with CTNNB1 via both its N- and C-terminal regions. Interacts with EP300. Interacts with CCAR1 (via N-terminus) and GATA1.

It is found in the cytoplasm. It localises to the nucleus. Functionally, functions as a coactivator for aryl hydrocarbon and nuclear receptors (NR). Recruited to promoters through its contact with the N-terminal basic helix-loop-helix-Per-Arnt-Sim (PAS) domain of transcription factors or coactivators, such as NCOA2. During ER-activation acts synergistically in combination with other NCOA2-binding proteins, such as EP300, CREBBP and CARM1. Involved in the transcriptional activation of target genes in the Wnt/CTNNB1 pathway. Functions as a secondary coactivator in LEF1-mediated transcriptional activation via its interaction with CTNNB1. Coactivator function for nuclear receptors and LEF1/CTNNB1 involves differential utilization of two different activation regions. In association with CCAR1 enhances GATA1- and MED1-mediated transcriptional activation from the gamma-globin promoter during erythroid differentiation of K562 erythroleukemia cells. Seems to enhance inorganic pyrophosphatase thus activating phosphogluomutase (PMG). Probably functions as a component of the calphoglin complex, which is involved in linking cellular metabolism (phosphate and glucose metabolism) with other core functions including protein synthesis and degradation, calcium signaling and cell growth. The protein is Calcium-binding and coiled-coil domain-containing protein 1 (CALCOCO1) of Pongo abelii (Sumatran orangutan).